The following is a 337-amino-acid chain: Glucose transporter 2C (337 aa).

Positions Met1–Ala22 are disordered. Residues Met1–Gln43 are Cytoplasmic-facing. A helical membrane pass occupies residues Val44–Tyr64. Residues Glu65–Ser119 are Extracellular-facing. An N-linked (GlcNAc...) asparagine glycan is attached at Asn69. Residues Leu120–Ala140 traverse the membrane as a helical segment. Topologically, residues Gly141 to Ser152 are cytoplasmic. A helical transmembrane segment spans residues Phe153–Thr173. At Asn174–Glu175 the chain is on the extracellular side. The chain crosses the membrane as a helical span at residues Phe176–Ile196. The Cytoplasmic segment spans residues Cys197–Gly214. The chain crosses the membrane as a helical span at residues Val215–Leu235. The Extracellular portion of the chain corresponds to Asp236–Arg250. The helical transmembrane segment at Phe251 to Phe271 threads the bilayer. Residues Leu272 to Gln300 lie on the Cytoplasmic side of the membrane. Residues Met301–Asn321 form a helical membrane-spanning segment. Residues Ala322 to Asp337 lie on the Extracellular side of the membrane.

Belongs to the major facilitator superfamily. Sugar transporter (TC 2.A.1.1) family.

It localises to the membrane. Facilitative glucose transporter. This chain is Glucose transporter 2C (THT2C), found in Trypanosoma brucei brucei.